The primary structure comprises 150 residues: Propanediol utilization protein PduV (150 aa).

The interval M1–D42 is targets protein to the BMC. G8–T15 contacts GTP.

Belongs to the EutP/PduV family. As to quaternary structure, interacts with PduU, probably via the PduU beta-barrel which is predicted by modeling to be on the exterior of the BMC.

It is found in the bacterial microcompartment. It participates in polyol metabolism; 1,2-propanediol degradation. Its function is as follows. May play a role in the spatial distribution of the bacterial microcompartment (BMC) dedicated to 1,2-PD degradation, perhaps being involved in cytoskeleton dynamics; might bind GTP. This subunit is directly targeted to the BMC. In terms of biological role, expression of a cosmid containing the full 21-gene pdu operon in E.coli allows E.coli to grow on 1,2-propanediol (1,2-PD) with the appearance of bacterial microcompartments (BMC) in its cytoplasm. The 1,2-PD-specific bacterial microcompartment (BMC) concentrates low levels of 1,2-PD catabolic enzymes, concentrates volatile reaction intermediates thus enhancing pathway flux and keeps the level of toxic, mutagenic propionaldehyde low. This chain is Propanediol utilization protein PduV, found in Citrobacter freundii.